The following is a 264-amino-acid chain: Phosphonates import ATP-binding protein PhnC (264 aa).

One can recognise an ABC transporter domain in the interval 3–246 (IRLQEAGLRH…MLDALYANEQ (244 aa)). 35–42 (GPSGAGKS) provides a ligand contact to ATP.

Belongs to the ABC transporter superfamily. Phosphonates importer (TC 3.A.1.9.1) family. In terms of assembly, the complex is composed of two ATP-binding proteins (PhnC), two transmembrane proteins (PhnE) and a solute-binding protein (PhnD).

It localises to the cell inner membrane. The enzyme catalyses phosphonate(out) + ATP + H2O = phosphonate(in) + ADP + phosphate + H(+). Functionally, part of the ABC transporter complex PhnCDE involved in phosphonates import. Responsible for energy coupling to the transport system. The protein is Phosphonates import ATP-binding protein PhnC of Pseudomonas entomophila (strain L48).